The primary structure comprises 273 residues: Large ribosomal subunit protein uL2c (273 aa).

Polar residues predominate over residues 1 to 31 (MAIHLSKTSSPSTRNGAVNSQVKSNSRNRLI). Disordered stretches follow at residues 1-53 (MAIH…GHRG) and 222-273 (MNPV…RRSK).

The protein belongs to the universal ribosomal protein uL2 family. In terms of assembly, part of the 50S ribosomal subunit.

Its subcellular location is the plastid. It is found in the chloroplast. The chain is Large ribosomal subunit protein uL2c (rpl2) from Pisum sativum (Garden pea).